A 565-amino-acid chain; its full sequence is NAD-dependent malic enzyme (565 aa).

Residue Tyr104 is the Proton donor of the active site. Arg157 serves as a coordination point for NAD(+). Lys175 acts as the Proton acceptor in catalysis. Positions 246, 247, and 270 each coordinate a divalent metal cation. The NAD(+) site is built by Asp270 and Asn418.

The protein belongs to the malic enzymes family. As to quaternary structure, homotetramer. The cofactor is Mg(2+). Mn(2+) is required as a cofactor.

It catalyses the reaction (S)-malate + NAD(+) = pyruvate + CO2 + NADH. The enzyme catalyses oxaloacetate + H(+) = pyruvate + CO2. The chain is NAD-dependent malic enzyme from Proteus mirabilis (strain HI4320).